The sequence spans 319 residues: 7,8-didemethyl-8-hydroxy-5-deazariboflavin synthase (319 aa).

In terms of domain architecture, Radical SAM core spans Val-6–Asn-236. Residues Cys-20, Cys-24, and Cys-27 each coordinate [4Fe-4S] cluster.

This sequence belongs to the radical SAM superfamily. CofG family. In terms of assembly, consists of two subunits, CofG and CofH. It depends on [4Fe-4S] cluster as a cofactor.

It carries out the reaction 5-amino-5-(4-hydroxybenzyl)-6-(D-ribitylimino)-5,6-dihydrouracil + S-adenosyl-L-methionine = 7,8-didemethyl-8-hydroxy-5-deazariboflavin + 5'-deoxyadenosine + L-methionine + NH4(+) + H(+). Its pathway is cofactor biosynthesis; coenzyme F0 biosynthesis. Catalyzes the radical-mediated synthesis of 7,8-didemethyl-8-hydroxy-5-deazariboflavin from 5-amino-5-(4-hydroxybenzyl)-6-(D-ribitylimino)-5,6-dihydrouracil. This is 7,8-didemethyl-8-hydroxy-5-deazariboflavin synthase from Gloeobacter violaceus (strain ATCC 29082 / PCC 7421).